We begin with the raw amino-acid sequence, 756 residues long: ATP-dependent zinc metalloprotease FtsH (756 aa).

The Cytoplasmic segment spans residues 1 to 44 (MGVPAGMPHPNGLQPQRKDKALAQNPNTPQKGSEAFLKKLIHSS). Residues 45–65 (WFFPGAAIVVMLGFLMASFFT) traverse the membrane as a helical segment. Residues 66-148 (QPSRQVDTNV…SYTDQPVEHS (83 aa)) lie on the Extracellular side of the membrane. Residues 149–169 (FLGSLVSLLLPILLFGVLFWF) traverse the membrane as a helical segment. The Cytoplasmic segment spans residues 170-756 (LMGRVGGGSS…NQNGAENERG (587 aa)). An ATP-binding site is contributed by 241–248 (GPPGTGKT). Position 463 (His463) interacts with Zn(2+). Glu464 is a catalytic residue. His467 and Asp539 together coordinate Zn(2+). Basic and acidic residues-rich tracts occupy residues 647 to 662 (PERE…ERTD) and 672 to 681 (LAKEAEKSEE). Residues 647-756 (PEREHWYSKP…NQNGAENERG (110 aa)) form a disordered region. Low complexity-rich tracts occupy residues 684–703 (AEAP…VPVA) and 713–724 (PLTDPDADPTVA). A compositionally biased stretch (polar residues) spans 744–756 (GTPNQNGAENERG).

In the central section; belongs to the AAA ATPase family. This sequence in the C-terminal section; belongs to the peptidase M41 family. As to quaternary structure, homohexamer. It depends on Zn(2+) as a cofactor.

It localises to the cell membrane. Acts as a processive, ATP-dependent zinc metallopeptidase for both cytoplasmic and membrane proteins. Plays a role in the quality control of integral membrane proteins. This Rothia mucilaginosa (strain DY-18) (Stomatococcus mucilaginosus) protein is ATP-dependent zinc metalloprotease FtsH.